A 404-amino-acid polypeptide reads, in one-letter code: Probable tRNA sulfurtransferase (404 aa).

The 106-residue stretch at 60 to 165 (QPIVEALKLV…DEAAYISYEE (106 aa)) folds into the THUMP domain. ATP-binding positions include 183 to 184 (ML), 208 to 209 (HF), Arg265, Gly287, and Gln296.

Belongs to the ThiI family.

It localises to the cytoplasm. The enzyme catalyses [ThiI sulfur-carrier protein]-S-sulfanyl-L-cysteine + a uridine in tRNA + 2 reduced [2Fe-2S]-[ferredoxin] + ATP + H(+) = [ThiI sulfur-carrier protein]-L-cysteine + a 4-thiouridine in tRNA + 2 oxidized [2Fe-2S]-[ferredoxin] + AMP + diphosphate. The catalysed reaction is [ThiS sulfur-carrier protein]-C-terminal Gly-Gly-AMP + S-sulfanyl-L-cysteinyl-[cysteine desulfurase] + AH2 = [ThiS sulfur-carrier protein]-C-terminal-Gly-aminoethanethioate + L-cysteinyl-[cysteine desulfurase] + A + AMP + 2 H(+). It participates in cofactor biosynthesis; thiamine diphosphate biosynthesis. Its function is as follows. Catalyzes the ATP-dependent transfer of a sulfur to tRNA to produce 4-thiouridine in position 8 of tRNAs, which functions as a near-UV photosensor. Also catalyzes the transfer of sulfur to the sulfur carrier protein ThiS, forming ThiS-thiocarboxylate. This is a step in the synthesis of thiazole, in the thiamine biosynthesis pathway. The sulfur is donated as persulfide by IscS. This is Probable tRNA sulfurtransferase from Streptococcus pyogenes serotype M12 (strain MGAS2096).